The chain runs to 1908 residues: Putative ankyrin repeat protein L484 (1908 aa).

ANK repeat units follow at residues 20–50, 60–97, 101–130, 134–167, and 1370–1399; these read DIME…KFNI, PNKT…PMDL, DNVW…SIDR, SNNT…DIDK, and DGNT…NPFT. Residues 1539–1603 adopt a coiled-coil conformation; the sequence is VQLLNPKLRD…QTNISDLEFK (65 aa).

It localises to the virion. The protein is Putative ankyrin repeat protein L484 of Acanthamoeba polyphaga mimivirus (APMV).